The primary structure comprises 196 residues: Protein GrpE (196 aa).

The tract at residues 1–39 (MSSKEQKTPEGQAPEEIIMDQHEEIEAVEPEASAEQVDP) is disordered.

This sequence belongs to the GrpE family. Homodimer.

It is found in the cytoplasm. Functionally, participates actively in the response to hyperosmotic and heat shock by preventing the aggregation of stress-denatured proteins, in association with DnaK and GrpE. It is the nucleotide exchange factor for DnaK and may function as a thermosensor. Unfolded proteins bind initially to DnaJ; upon interaction with the DnaJ-bound protein, DnaK hydrolyzes its bound ATP, resulting in the formation of a stable complex. GrpE releases ADP from DnaK; ATP binding to DnaK triggers the release of the substrate protein, thus completing the reaction cycle. Several rounds of ATP-dependent interactions between DnaJ, DnaK and GrpE are required for fully efficient folding. The polypeptide is Protein GrpE (Escherichia coli (strain SMS-3-5 / SECEC)).